A 444-amino-acid polypeptide reads, in one-letter code: MVLDNLGGSLRGALKKIASATRVDKALVDDAVRDIQRALLQADVNVKLVMSLSNRIRERALNEKPPAGMNPREHVINIVYQELINLIGRGTDIPLKKQTIMLVGLQGSGKTTTAAKLATYFQRRGLRTAVICADTFRAGAYDQLKALCDRQGIFFYGEKGNENAPEVAKNGLEATKKYDVRIVDTAGRHALESDLIQEMKDIHAVVNADHKLLVMDAAIGQQASEQARAFNEAVGITGVIITKLDGTAKGGGALSAVAETKTSVAFIGVGETASDLEKFEADRFISRLLGMGDIKGLIEKAQEVQIESDVDVDAMMKGKFTLKDMYKQLEAMNKMGPLKQIMQMLPFGGIGIELSDKEYQVTKERLEAYRFIMDSMTDEELEDPKIINASRIKRIARGSGTRPELVKELLKSHAAMQKAIKGMRGGMGRMNMKKLMKRLGQPKV.

GTP-binding positions include glycine 104 to threonine 111, aspartate 184 to arginine 188, and threonine 242 to aspartate 245.

The protein belongs to the GTP-binding SRP family. SRP54 subfamily. Part of the signal recognition particle protein translocation system, which is composed of SRP and FtsY. Archaeal SRP consists of a 7S RNA molecule of 300 nucleotides and two protein subunits: SRP54 and SRP19.

It localises to the cytoplasm. The enzyme catalyses GTP + H2O = GDP + phosphate + H(+). Functionally, involved in targeting and insertion of nascent membrane proteins into the cytoplasmic membrane. Binds to the hydrophobic signal sequence of the ribosome-nascent chain (RNC) as it emerges from the ribosomes. The SRP-RNC complex is then targeted to the cytoplasmic membrane where it interacts with the SRP receptor FtsY. This chain is Signal recognition particle 54 kDa protein, found in Methanothrix thermoacetophila (strain DSM 6194 / JCM 14653 / NBRC 101360 / PT) (Methanosaeta thermophila).